The primary structure comprises 420 residues: Pyridinium-3,5-bisthiocarboxylic acid mononucleotide nickel insertion protein (420 aa).

This sequence belongs to the LarC family.

The catalysed reaction is Ni(II)-pyridinium-3,5-bisthiocarboxylate mononucleotide = pyridinium-3,5-bisthiocarboxylate mononucleotide + Ni(2+). In terms of biological role, involved in the biosynthesis of a nickel-pincer cofactor ((SCS)Ni(II) pincer complex). Binds Ni(2+), and functions in nickel delivery to pyridinium-3,5-bisthiocarboxylic acid mononucleotide (P2TMN), to form the mature cofactor. Is required for the activation of the lactate racemase LarA. May also be involved in the activation of other nickel-pincer cofactor-dependent enzymes. The chain is Pyridinium-3,5-bisthiocarboxylic acid mononucleotide nickel insertion protein from Lactiplantibacillus plantarum (strain ATCC BAA-793 / NCIMB 8826 / WCFS1) (Lactobacillus plantarum).